The sequence spans 210 residues: dTTP/UTP pyrophosphatase (210 aa).

Residue D89 is the Proton acceptor of the active site.

This sequence belongs to the Maf family. YhdE subfamily. The cofactor is a divalent metal cation.

It is found in the cytoplasm. It carries out the reaction dTTP + H2O = dTMP + diphosphate + H(+). The enzyme catalyses UTP + H2O = UMP + diphosphate + H(+). In terms of biological role, nucleoside triphosphate pyrophosphatase that hydrolyzes dTTP and UTP. May have a dual role in cell division arrest and in preventing the incorporation of modified nucleotides into cellular nucleic acids. In Burkholderia lata (strain ATCC 17760 / DSM 23089 / LMG 22485 / NCIMB 9086 / R18194 / 383), this protein is dTTP/UTP pyrophosphatase.